The chain runs to 89 residues: MYNTTPLNFAINQENNEEVIKYLLANGANPRLALVDIIEAGNNNALNLLMKVAPSITVDEVFPQVMAMGMRRFFQAVQNKDLSAIKDFI.

One copy of the ANK repeat lies at 2–32; that stretch reads YNTTPLNFAINQENNEEVIKYLLANGANPRL.

The chain is Putative ankyrin repeat protein RF_1157 from Rickettsia felis (strain ATCC VR-1525 / URRWXCal2) (Rickettsia azadi).